The following is a 318-amino-acid chain: Probable tyrosine phosphatase protein N1 (318 aa).

The Tyrosine-protein phosphatase domain occupies 26 to 292 (IVRLEHHQVI…LILQPGYYVL (267 aa)). The Phosphocysteine intermediate role is filled by Cys-233.

It belongs to the protein-tyrosine phosphatase family.

It catalyses the reaction O-phospho-L-tyrosyl-[protein] + H2O = L-tyrosyl-[protein] + phosphate. The polypeptide is Probable tyrosine phosphatase protein N1 (N3) (Microplitis demolitor bracovirus (isolate Webb) (MdBV)).